A 743-amino-acid chain; its full sequence is MVSEKTMAERVLALMGRPNNIRNIGIIAHIHHGKTTLTDNLLAGAGMLSEELAGDAMFTWWHEQEREREMTIYGAAVSMVHEYEGDDYLINLIDTPGHVEFGGEVTRAVRAIDGAVVVVDFVDGIMPQTETVLKQALREYVKPVLFINKVDRAIKELQLPPNKIMERLAEIVVGVNDLIERYAPEEFKDKWKVSVQNGTVAFGSALHNWALSVPYMQKTGIGFKQIAEIYNTAADAKEIRRRVWEIAPLYRVVLDMVVRHLPSPKEAQKYRVPKLWHGDLNSKYGKAMLEADPNGPAVAVVTKVIVDKTSKQETAIARVWSGTIRRGMEVWLLNANKKVRLQQVGVFKGIQKIQIEEAKAGNIIAISGVRDLQSGETIVEPEPDGSKPNIPPFEAIKHIFDPVVTKAIEPKDPRDLPKLIEVLKLIQKEDPTLKVEIDQESGQILISGLGDLHLEIVEYRIKNDFKVDIITSNPIVVYRESVKGQAGPVEGKSPNKLNKFYITVEKMPDELYWKLREKLLKGELPEGKIKKMNEDIIKHLMSLGFTREEAQRCKVIYRENMFFDMTRGIIHIGEVIDMVMDAFMQVMDHGPIAWEPCIGLIVKLTDAQLHEDAIHRGPGQVIPAVREAIKLAMKDAGLVLYEPVQVILVDVPPDYIGDVTALINSRRGAILDIQTEEDRALIKAKVPVREMIGFTDTLRSATSGRGVWYLVDQVYEPVPRELFDQIVREIRQRKGLPLDADIV.

The region spanning 19-265 is the tr-type G domain; sequence NNIRNIGIIA…MVVRHLPSPK (247 aa). Residues 28 to 35, 94 to 98, and 148 to 151 contribute to the GTP site; these read AHIHHGKT, DTPGH, and NKVD. His-615 carries the diphthamide modification.

Belongs to the TRAFAC class translation factor GTPase superfamily. Classic translation factor GTPase family. EF-G/EF-2 subfamily.

The protein localises to the cytoplasm. Catalyzes the GTP-dependent ribosomal translocation step during translation elongation. During this step, the ribosome changes from the pre-translocational (PRE) to the post-translocational (POST) state as the newly formed A-site-bound peptidyl-tRNA and P-site-bound deacylated tRNA move to the P and E sites, respectively. Catalyzes the coordinated movement of the two tRNA molecules, the mRNA and conformational changes in the ribosome. This chain is Elongation factor 2, found in Nanoarchaeum equitans (strain Kin4-M).